Here is a 547-residue protein sequence, read N- to C-terminus: Tripartite motif-containing protein 5 (547 aa).

Ala-2 is subject to N-acetylalanine. The RING-type zinc-finger motif lies at 15-59 (CPICLELLTEPLSLDCGHSFCQACITANHKESTLHQGERSCPLCR). At Ser-86 the chain carries Phosphoserine. Residues 91–132 (QKVDRCARHGEKLLLFCQQHGNVICWLCERSQEHRGHSTFLV) form a B box-type zinc finger. Zn(2+) is bound by residues Cys-96, His-99, Cys-118, and His-124. Residues 132-225 (VEEVAQKYQE…AQSENDMVLQ (94 aa)) adopt a coiled-coil conformation. Positions 186 to 199 (FKQLRDILDCEESN) are required for interaction with GABARAP and for autophagy. The B30.2/SPRY domain occupies 280–547 (PDLKGMLQVF…LPMTLCSPSS (268 aa)).

The protein belongs to the TRIM/RBCC family. Can form homodimers and homotrimers. In addition to lower-order dimerization, also exhibits a higher-order multimerization and both low- and high-order multimerizations are essential for its restriction activity. Interacts with BTBD1 and BTBD2. Interacts with PSMC4, PSMC5, PSMD7 and HSPA8/HSC70. Interacts (via B30.2/SPRY domain) with HSPA1A/B. Interacts with PSMC2, MAP3K7/TAK1, TAB2 and TAB3. Interacts with SQSTM1. Interacts with TRIM6 and TRIM34. Interacts with ULK1 (phosphorylated form), GABARAP, GABARAPL1, GABARAPL2, MAP1LC3A, MAP1LC3C and BECN1. In terms of processing, degraded in a proteasome-independent fashion in the absence of viral infection but in a proteasome-dependent fashion following exposure to restriction sensitive virus. Autoubiquitinated in a RING finger- and UBE2D2-dependent manner. Monoubiquitinated by TRIM21. Deubiquitinated by Yersinia YopJ. Ubiquitination may not lead to proteasomal degradation.

It localises to the cytoplasm. Its subcellular location is the nucleus. The catalysed reaction is S-ubiquitinyl-[E2 ubiquitin-conjugating enzyme]-L-cysteine + [acceptor protein]-L-lysine = [E2 ubiquitin-conjugating enzyme]-L-cysteine + N(6)-ubiquitinyl-[acceptor protein]-L-lysine.. The protein operates within protein modification; protein ubiquitination. In terms of biological role, capsid-specific restriction factor that prevents infection from non-host-adapted retroviruses. Blocks viral replication early in the life cycle, after viral entry but before reverse transcription. In addition to acting as a capsid-specific restriction factor, also acts as a pattern recognition receptor that activates innate immune signaling in response to the retroviral capsid lattice. Binding to the viral capsid triggers its E3 ubiquitin ligase activity, and in concert with the heterodimeric ubiquitin conjugating enzyme complex UBE2V1-UBE2N (also known as UBC13-UEV1A complex) generates 'Lys-63'-linked polyubiquitin chains, which in turn are catalysts in the autophosphorylation of the MAP3K7/TAK1 complex (includes TAK1, TAB2, and TAB3). Activation of the MAP3K7/TAK1 complex by autophosphorylation results in the induction and expression of NF-kappa-B and MAPK-responsive inflammatory genes, thereby leading to an innate immune response in the infected cell. Plays a role in regulating autophagy through activation of autophagy regulator BECN1 by causing its dissociation from its inhibitors BCL2 and TAB2. The sequence is that of Tripartite motif-containing protein 5 (TRIM5) from Ateles geoffroyi (Black-handed spider monkey).